We begin with the raw amino-acid sequence, 216 residues long: Large ribosomal subunit protein uL3 (216 aa).

The interval 132–157 is disordered; the sequence is FRGQGASHGTQAVHRKPGSIGGCATP.

The protein belongs to the universal ribosomal protein uL3 family. In terms of assembly, part of the 50S ribosomal subunit. Forms a cluster with proteins L14 and L19.

In terms of biological role, one of the primary rRNA binding proteins, it binds directly near the 3'-end of the 23S rRNA, where it nucleates assembly of the 50S subunit. The protein is Large ribosomal subunit protein uL3 of Saccharopolyspora erythraea (strain ATCC 11635 / DSM 40517 / JCM 4748 / NBRC 13426 / NCIMB 8594 / NRRL 2338).